Here is a 165-residue protein sequence, read N- to C-terminus: Large ribosomal subunit protein uL10 (165 aa).

This sequence belongs to the universal ribosomal protein uL10 family. Part of the ribosomal stalk of the 50S ribosomal subunit. The N-terminus interacts with L11 and the large rRNA to form the base of the stalk. The C-terminus forms an elongated spine to which L12 dimers bind in a sequential fashion forming a multimeric L10(L12)X complex.

Functionally, forms part of the ribosomal stalk, playing a central role in the interaction of the ribosome with GTP-bound translation factors. The sequence is that of Large ribosomal subunit protein uL10 from Paraburkholderia phymatum (strain DSM 17167 / CIP 108236 / LMG 21445 / STM815) (Burkholderia phymatum).